The following is a 224-amino-acid chain: Octanoyltransferase (224 aa).

Residues 33 to 213 (GTTAETMLLL…ALQAEFGREA (181 aa)) form the BPL/LPL catalytic domain. Residues 51–71 (GKRTTDDERPTDGTPVVDVDR) are disordered. Substrate is bound by residues 71 to 78 (RGGKITWH), 143 to 145 (AIG), and 156 to 158 (GFA). Catalysis depends on C174, which acts as the Acyl-thioester intermediate.

It belongs to the LipB family.

It is found in the cytoplasm. The enzyme catalyses octanoyl-[ACP] + L-lysyl-[protein] = N(6)-octanoyl-L-lysyl-[protein] + holo-[ACP] + H(+). It participates in protein modification; protein lipoylation via endogenous pathway; protein N(6)-(lipoyl)lysine from octanoyl-[acyl-carrier-protein]: step 1/2. Its function is as follows. Catalyzes the transfer of endogenously produced octanoic acid from octanoyl-acyl-carrier-protein onto the lipoyl domains of lipoate-dependent enzymes. Lipoyl-ACP can also act as a substrate although octanoyl-ACP is likely to be the physiological substrate. The polypeptide is Octanoyltransferase (Leifsonia xyli subsp. xyli (strain CTCB07)).